A 314-amino-acid polypeptide reads, in one-letter code: MSLNIITEKDKKQSYNLNKLQKRLRRNVGNAIADFNMIENGDKVMVCLSGGKDSYTLLDILLNLRLNAPIHFDIVAVNLDQKQPGFPEHILPEYLKSISVDYKIVAENTYGIVKEKIPEGKTTCSLCSRLRRGILYRTATELGATKIALGHHRDDMLETLFLNMFYGGKLKSMPPKLISDDGKQIVIRPLAYCKEKDIEKYAVAKQFPIIPCNLCGSQPNLQRQVVKEMLQKWDRQYPGRIETMFSAIQNIVPSHLCDSNLFDFKRIRHGKIPEGIEGDIAFDKEAFSPTPLVQENDEKIDFIQGEMISFKEVN.

A PP-loop motif motif is present at residues 49-54 (SGGKDS). [4Fe-4S] cluster-binding residues include C124, C127, and C215.

Belongs to the TtcA family. In terms of assembly, homodimer. Mg(2+) is required as a cofactor. It depends on [4Fe-4S] cluster as a cofactor.

Its subcellular location is the cytoplasm. The enzyme catalyses cytidine(32) in tRNA + S-sulfanyl-L-cysteinyl-[cysteine desulfurase] + AH2 + ATP = 2-thiocytidine(32) in tRNA + L-cysteinyl-[cysteine desulfurase] + A + AMP + diphosphate + H(+). The protein operates within tRNA modification. In terms of biological role, catalyzes the ATP-dependent 2-thiolation of cytidine in position 32 of tRNA, to form 2-thiocytidine (s(2)C32). The sulfur atoms are provided by the cysteine/cysteine desulfurase (IscS) system. This is tRNA-cytidine(32) 2-sulfurtransferase from Histophilus somni (strain 2336) (Haemophilus somnus).